Reading from the N-terminus, the 89-residue chain is Small ribosomal subunit protein uS15 (89 aa).

This sequence belongs to the universal ribosomal protein uS15 family. Part of the 30S ribosomal subunit. Forms a bridge to the 50S subunit in the 70S ribosome, contacting the 23S rRNA.

Its function is as follows. One of the primary rRNA binding proteins, it binds directly to 16S rRNA where it helps nucleate assembly of the platform of the 30S subunit by binding and bridging several RNA helices of the 16S rRNA. Forms an intersubunit bridge (bridge B4) with the 23S rRNA of the 50S subunit in the ribosome. In Shewanella amazonensis (strain ATCC BAA-1098 / SB2B), this protein is Small ribosomal subunit protein uS15.